Reading from the N-terminus, the 548-residue chain is Luciferin 4-monooxygenase (548 aa).

Positions A546–M548 match the Microbody targeting signal motif.

It belongs to the ATP-dependent AMP-binding enzyme family. Homodimer. Mg(2+) serves as cofactor.

It localises to the peroxisome. It carries out the reaction firefly D-luciferin + ATP + O2 = firefly oxyluciferin + hnu + AMP + CO2 + diphosphate. Inhibited by ATP analogs and sodium deoxycholate. Activated by choline-containing phospholipids. Functionally, produces green light with a wavelength of 570 nm. This chain is Luciferin 4-monooxygenase, found in Luciola mingrelica (Southern Russian firefly).